The sequence spans 180 residues: Inner membrane-spanning protein YciB (180 aa).

A run of 5 helical transmembrane segments spans residues 25–45 (QNAT…CYVI), 49–69 (VSKL…ITLI), 76–96 (IKIK…MSGI), 118–138 (IILS…NEIV), and 150–170 (FKVF…LPLL).

It belongs to the YciB family.

Its subcellular location is the cell inner membrane. In terms of biological role, plays a role in cell envelope biogenesis, maintenance of cell envelope integrity and membrane homeostasis. This chain is Inner membrane-spanning protein YciB, found in Rickettsia felis (strain ATCC VR-1525 / URRWXCal2) (Rickettsia azadi).